The following is a 225-amino-acid chain: UPF0758 protein Ssed_0385 (225 aa).

Residues 102 to 224 form the MPN domain; it reads ILSDPDLTRD…IVSFAERGWI (123 aa). Zn(2+) is bound by residues His173, His175, and Asp186. A JAMM motif motif is present at residues 173–186; that stretch reads HNHPSGVAEPSLAD.

The protein belongs to the UPF0758 family.

The chain is UPF0758 protein Ssed_0385 from Shewanella sediminis (strain HAW-EB3).